A 438-amino-acid chain; its full sequence is Enolase (438 aa).

Residue glutamine 164 participates in (2R)-2-phosphoglycerate binding. Glutamate 206 acts as the Proton donor in catalysis. Mg(2+) contacts are provided by aspartate 243, glutamate 289, and aspartate 316. Residues lysine 341, arginine 370, serine 371, and lysine 392 each coordinate (2R)-2-phosphoglycerate. Lysine 341 acts as the Proton acceptor in catalysis.

The protein belongs to the enolase family. Requires Mg(2+) as cofactor.

It is found in the cytoplasm. Its subcellular location is the secreted. The protein localises to the cell surface. The catalysed reaction is (2R)-2-phosphoglycerate = phosphoenolpyruvate + H2O. It functions in the pathway carbohydrate degradation; glycolysis; pyruvate from D-glyceraldehyde 3-phosphate: step 4/5. Catalyzes the reversible conversion of 2-phosphoglycerate (2-PG) into phosphoenolpyruvate (PEP). It is essential for the degradation of carbohydrates via glycolysis. This is Enolase from Borrelia garinii subsp. bavariensis (strain ATCC BAA-2496 / DSM 23469 / PBi) (Borreliella bavariensis).